A 550-amino-acid polypeptide reads, in one-letter code: Glutamyl-tRNA(Gln) amidotransferase subunit A, mitochondrial (550 aa).

Residues Lys79 and Ser171 each act as charge relay system in the active site. The active-site Acyl-ester intermediate is the Ser195. The segment at 371 to 390 (EKDENKVDNDNDDDDDVDEN) is disordered.

Belongs to the amidase family. GatA subfamily. Subunit of the heterotrimeric GatCAB amidotransferase (AdT) complex, composed of A, B and C subunits.

It is found in the mitochondrion. The enzyme catalyses L-glutamyl-tRNA(Gln) + L-glutamine + ATP + H2O = L-glutaminyl-tRNA(Gln) + L-glutamate + ADP + phosphate + H(+). Functionally, allows the formation of correctly charged Gln-tRNA(Gln) through the transamidation of misacylated Glu-tRNA(Gln) in the mitochondria. The reaction takes place in the presence of glutamine and ATP through an activated gamma-phospho-Glu-tRNA(Gln). The chain is Glutamyl-tRNA(Gln) amidotransferase subunit A, mitochondrial from Dictyostelium discoideum (Social amoeba).